The chain runs to 688 residues: PTS system glucoside-specific EIICBA component (688 aa).

Positions 3–427 (KKLFGQLQRI…FKLKTPGRED (425 aa)) constitute a PTS EIIC type-1 domain. A run of 10 helical transmembrane segments spans residues 12–32 (IGKA…LLAF), 81–101 (LGLA…YLIM), 137–157 (LVLG…MGAL), 182–202 (FVPI…SFAW), 223–243 (LTTF…LHHI), 284–304 (AFTT…AFAI), 315–335 (VVGG…ITEP), 340–360 (FLFV…TSFL), 364–384 (LLGV…ILYG), and 395–415 (LVIP…DFAI). The 82-residue stretch at 438-519 (AKLPFDVLDA…AKIMSGEITK (82 aa)) folds into the PTS EIIB type-1 domain. The active-site Phosphocysteine intermediate; for EIIB activity is the Cys460. Residues 560 to 664 (DQVFAGKMMG…SIVTPMIITN (105 aa)) enclose the PTS EIIA type-1 domain. His612 serves as the catalytic Tele-phosphohistidine intermediate; for EIIA activity.

The protein resides in the cell membrane. The phosphoenolpyruvate-dependent sugar phosphotransferase system (sugar PTS), a major carbohydrate active -transport system, catalyzes the phosphorylation of incoming sugar substrates concomitantly with their translocation across the cell membrane. This system is involved in alpha- and beta-glucoside transport. This is PTS system glucoside-specific EIICBA component (glcB) from Staphylococcus aureus (strain USA300).